The chain runs to 442 residues: Exodeoxyribonuclease 7 large subunit (442 aa).

The disordered stretch occupies residues 1–38; sequence MSDSTQFSLFDSGDDEPAKVTAPKRKVARKKRSSSSSD. The span at 22–33 shows a compositional bias: basic residues; sequence APKRKVARKKRS.

The protein belongs to the XseA family. Heterooligomer composed of large and small subunits.

It is found in the cytoplasm. It carries out the reaction Exonucleolytic cleavage in either 5'- to 3'- or 3'- to 5'-direction to yield nucleoside 5'-phosphates.. Its function is as follows. Bidirectionally degrades single-stranded DNA into large acid-insoluble oligonucleotides, which are then degraded further into small acid-soluble oligonucleotides. The polypeptide is Exodeoxyribonuclease 7 large subunit (Rhodopirellula baltica (strain DSM 10527 / NCIMB 13988 / SH1)).